Consider the following 205-residue polypeptide: Small ribosomal subunit protein uS4 (205 aa).

The segment at 1 to 46 (MSKRHSAKYKIDRRMGENLWGRPKSPVNQRSYGPGQHGQRRKQKVS) is disordered. The region spanning 94–154 (SRLDAIVYRA…EKSRNMALVL (61 aa)) is the S4 RNA-binding domain.

This sequence belongs to the universal ribosomal protein uS4 family. Part of the 30S ribosomal subunit. Contacts protein S5. The interaction surface between S4 and S5 is involved in control of translational fidelity.

In terms of biological role, one of the primary rRNA binding proteins, it binds directly to 16S rRNA where it nucleates assembly of the body of the 30S subunit. With S5 and S12 plays an important role in translational accuracy. The polypeptide is Small ribosomal subunit protein uS4 (Caulobacter sp. (strain K31)).